The following is a 194-amino-acid chain: Outer surface 22 kDa lipoprotein (194 aa).

Residues 1–21 form the signal peptide; the sequence is MYKNGFFKNYLSLFLIFLVIA. Residue cysteine 22 is the site of N-palmitoyl cysteine attachment. Cysteine 22 carries the S-diacylglycerol cysteine lipid modification.

The protein resides in the cell outer membrane. The polypeptide is Outer surface 22 kDa lipoprotein (p22) (Borreliella burgdorferi (strain ZS7) (Borrelia burgdorferi)).